Reading from the N-terminus, the 276-residue chain is 2-dehydro-3-deoxyphosphooctonate aldolase (276 aa).

The protein belongs to the KdsA family.

The protein resides in the cytoplasm. The catalysed reaction is D-arabinose 5-phosphate + phosphoenolpyruvate + H2O = 3-deoxy-alpha-D-manno-2-octulosonate-8-phosphate + phosphate. The protein operates within carbohydrate biosynthesis; 3-deoxy-D-manno-octulosonate biosynthesis; 3-deoxy-D-manno-octulosonate from D-ribulose 5-phosphate: step 2/3. It participates in bacterial outer membrane biogenesis; lipopolysaccharide biosynthesis. This is 2-dehydro-3-deoxyphosphooctonate aldolase from Stenotrophomonas maltophilia (strain R551-3).